A 121-amino-acid polypeptide reads, in one-letter code: Large ribosomal subunit protein mL52 (121 aa).

A mitochondrion-targeting transit peptide spans 1–22 (MAALGTWLSSVRRLHCSVVARA). Residues 98 to 109 (QEERKKEHDLKP) are compositionally biased toward basic and acidic residues. The tract at residues 98-121 (QEERKKEHDLKPKGTLLRSPLPNQ) is disordered.

It belongs to the mitochondrion-specific ribosomal protein mL52 family. Component of the mitochondrial ribosome large subunit (39S) which comprises a 16S rRNA and about 50 distinct proteins.

The protein resides in the mitochondrion. This chain is Large ribosomal subunit protein mL52 (Mrpl52), found in Mus musculus (Mouse).